Here is a 256-residue protein sequence, read N- to C-terminus: Trans-aconitate 2-methyltransferase (256 aa).

It belongs to the methyltransferase superfamily. Tam family.

The protein resides in the cytoplasm. It carries out the reaction trans-aconitate + S-adenosyl-L-methionine = (E)-3-(methoxycarbonyl)pent-2-enedioate + S-adenosyl-L-homocysteine. Functionally, catalyzes the S-adenosylmethionine monomethyl esterification of trans-aconitate. This chain is Trans-aconitate 2-methyltransferase, found in Rhodopseudomonas palustris (strain HaA2).